The sequence spans 278 residues: Small ribosomal subunit protein uS3 (278 aa).

The 69-residue stretch at 38-106 folds into the KH type-2 domain; sequence IRKLLSKGME…QVQLNILEVK (69 aa). A disordered region spans residues 213 to 278; the sequence is RQAQAAARAG…APAPAENQEG (66 aa). Over residues 214 to 223 the composition is skewed to low complexity; that stretch reads QAQAAARAGV. Basic and acidic residues predominate over residues 232–253; that stretch reads RGGERPSRGSRGDRPTRADRGG. Residues 259–278 are compositionally biased toward low complexity; sequence EATGAATEQAAPAPAENQEG.

The protein belongs to the universal ribosomal protein uS3 family. As to quaternary structure, part of the 30S ribosomal subunit. Forms a tight complex with proteins S10 and S14.

In terms of biological role, binds the lower part of the 30S subunit head. Binds mRNA in the 70S ribosome, positioning it for translation. This is Small ribosomal subunit protein uS3 from Nocardioides sp. (strain ATCC BAA-499 / JS614).